The following is a 338-amino-acid chain: Tetraacyldisaccharide 4'-kinase (338 aa).

65–72 (TVGGTGKT) lines the ATP pocket.

Belongs to the LpxK family.

It carries out the reaction a lipid A disaccharide + ATP = a lipid IVA + ADP + H(+). Its pathway is glycolipid biosynthesis; lipid IV(A) biosynthesis; lipid IV(A) from (3R)-3-hydroxytetradecanoyl-[acyl-carrier-protein] and UDP-N-acetyl-alpha-D-glucosamine: step 6/6. In terms of biological role, transfers the gamma-phosphate of ATP to the 4'-position of a tetraacyldisaccharide 1-phosphate intermediate (termed DS-1-P) to form tetraacyldisaccharide 1,4'-bis-phosphate (lipid IVA). In Paraburkholderia xenovorans (strain LB400), this protein is Tetraacyldisaccharide 4'-kinase.